The sequence spans 151 residues: Ribosome maturation factor RimP (151 aa).

It belongs to the RimP family.

It is found in the cytoplasm. Its function is as follows. Required for maturation of 30S ribosomal subunits. The sequence is that of Ribosome maturation factor RimP from Pseudoalteromonas translucida (strain TAC 125).